A 249-amino-acid polypeptide reads, in one-letter code: Acetylglutamate kinase (249 aa).

Residues 42-43, arginine 64, and asparagine 155 each bind substrate; that span reads GG.

It belongs to the acetylglutamate kinase family. ArgB subfamily.

The protein resides in the cytoplasm. It catalyses the reaction N-acetyl-L-glutamate + ATP = N-acetyl-L-glutamyl 5-phosphate + ADP. The protein operates within amino-acid biosynthesis; L-arginine biosynthesis; N(2)-acetyl-L-ornithine from L-glutamate: step 2/4. In terms of biological role, catalyzes the ATP-dependent phosphorylation of N-acetyl-L-glutamate. This is Acetylglutamate kinase from Endomicrobium trichonymphae.